Here is a 330-residue protein sequence, read N- to C-terminus: DNA-directed RNA polymerase subunit alpha (330 aa).

An alpha N-terminal domain (alpha-NTD) region spans residues 1 to 236 (MQNSVIEFLK…EQLEAFIDLR (236 aa)). The segment at 250–330 (FDPILLRLVD…NWPPTNILDN (81 aa)) is alpha C-terminal domain (alpha-CTD).

The protein belongs to the RNA polymerase alpha chain family. As to quaternary structure, homodimer. The RNAP catalytic core consists of 2 alpha, 1 beta, 1 beta' and 1 omega subunit. When a sigma factor is associated with the core the holoenzyme is formed, which can initiate transcription.

The enzyme catalyses RNA(n) + a ribonucleoside 5'-triphosphate = RNA(n+1) + diphosphate. Functionally, DNA-dependent RNA polymerase catalyzes the transcription of DNA into RNA using the four ribonucleoside triphosphates as substrates. The protein is DNA-directed RNA polymerase subunit alpha of Blochmanniella pennsylvanica (strain BPEN).